A 124-amino-acid chain; its full sequence is Small ribosomal subunit protein uS12 (124 aa).

Asp89 is modified (3-methylthioaspartic acid). The segment at 104 to 124 (TQGVKNRGQARSRYGAKKEKK) is disordered. Residues 111–124 (GQARSRYGAKKEKK) are compositionally biased toward basic residues.

The protein belongs to the universal ribosomal protein uS12 family. As to quaternary structure, part of the 30S ribosomal subunit. Contacts proteins S8 and S17. May interact with IF1 in the 30S initiation complex.

With S4 and S5 plays an important role in translational accuracy. In terms of biological role, interacts with and stabilizes bases of the 16S rRNA that are involved in tRNA selection in the A site and with the mRNA backbone. Located at the interface of the 30S and 50S subunits, it traverses the body of the 30S subunit contacting proteins on the other side and probably holding the rRNA structure together. The combined cluster of proteins S8, S12 and S17 appears to hold together the shoulder and platform of the 30S subunit. This Micrococcus luteus (strain ATCC 4698 / DSM 20030 / JCM 1464 / CCM 169 / CCUG 5858 / IAM 1056 / NBRC 3333 / NCIMB 9278 / NCTC 2665 / VKM Ac-2230) (Micrococcus lysodeikticus) protein is Small ribosomal subunit protein uS12.